Reading from the N-terminus, the 73-residue chain is Putative membrane protein insertion efficiency factor (73 aa).

The protein belongs to the UPF0161 family.

Its subcellular location is the cell inner membrane. In terms of biological role, could be involved in insertion of integral membrane proteins into the membrane. The polypeptide is Putative membrane protein insertion efficiency factor (Neisseria gonorrhoeae (strain ATCC 700825 / FA 1090)).